We begin with the raw amino-acid sequence, 565 residues long: Dihydroxy-acid dehydratase (565 aa).

Residue aspartate 80 participates in Mg(2+) binding. Residue cysteine 121 coordinates [2Fe-2S] cluster. The Mg(2+) site is built by aspartate 122 and lysine 123. Lysine 123 bears the N6-carboxylysine mark. A [2Fe-2S] cluster-binding site is contributed by cysteine 194. Glutamate 447 serves as a coordination point for Mg(2+). The active-site Proton acceptor is the serine 473.

This sequence belongs to the IlvD/Edd family. Homodimer. The cofactor is [2Fe-2S] cluster. Mg(2+) serves as cofactor.

The catalysed reaction is (2R)-2,3-dihydroxy-3-methylbutanoate = 3-methyl-2-oxobutanoate + H2O. It catalyses the reaction (2R,3R)-2,3-dihydroxy-3-methylpentanoate = (S)-3-methyl-2-oxopentanoate + H2O. It functions in the pathway amino-acid biosynthesis; L-isoleucine biosynthesis; L-isoleucine from 2-oxobutanoate: step 3/4. Its pathway is amino-acid biosynthesis; L-valine biosynthesis; L-valine from pyruvate: step 3/4. Its function is as follows. Functions in the biosynthesis of branched-chain amino acids. Catalyzes the dehydration of (2R,3R)-2,3-dihydroxy-3-methylpentanoate (2,3-dihydroxy-3-methylvalerate) into 2-oxo-3-methylpentanoate (2-oxo-3-methylvalerate) and of (2R)-2,3-dihydroxy-3-methylbutanoate (2,3-dihydroxyisovalerate) into 2-oxo-3-methylbutanoate (2-oxoisovalerate), the penultimate precursor to L-isoleucine and L-valine, respectively. The sequence is that of Dihydroxy-acid dehydratase from Chlorobium luteolum (strain DSM 273 / BCRC 81028 / 2530) (Pelodictyon luteolum).